The primary structure comprises 134 residues: Holo-[acyl-carrier-protein] synthase (134 aa).

Residues aspartate 8 and glutamate 57 each contribute to the Mg(2+) site.

The protein belongs to the P-Pant transferase superfamily. AcpS family. Mg(2+) serves as cofactor.

It localises to the cytoplasm. It carries out the reaction apo-[ACP] + CoA = holo-[ACP] + adenosine 3',5'-bisphosphate + H(+). Functionally, transfers the 4'-phosphopantetheine moiety from coenzyme A to a Ser of acyl-carrier-protein. This chain is Holo-[acyl-carrier-protein] synthase, found in Agrobacterium fabrum (strain C58 / ATCC 33970) (Agrobacterium tumefaciens (strain C58)).